A 604-amino-acid chain; its full sequence is Linalool synthase Tps-5073L4, chloroplastic (604 aa).

The N-terminal 36 residues, methionine 1–serine 36, are a transit peptide targeting the chloroplast. 5 residues coordinate (2E)-geranyl diphosphate: arginine 323, aspartate 360, aspartate 364, arginine 501, and aspartate 504. Mg(2+) is bound by residues aspartate 360 and aspartate 364. Positions aspartate 360–aspartate 364 match the DDXXD motif motif. Residues aspartate 504, threonine 508, and glutamate 512 each coordinate Mg(2+).

This sequence belongs to the terpene synthase family. Tpsb subfamily. In terms of assembly, monomer. The cofactor is Mg(2+). Requires Mn(2+) as cofactor.

It is found in the plastid. The protein resides in the chloroplast. The enzyme catalyses (2E)-geranyl diphosphate + H2O = linalool + diphosphate. Its pathway is secondary metabolite biosynthesis; terpenoid biosynthesis. Monoterpene synthase (mono-TPS) involved in the biosynthesis of monoterpenes natural products. Catalyzes the conversion of (2E)-geranyl diphosphate (GPP) into linalool. This Perilla frutescens (Beefsteak mint) protein is Linalool synthase Tps-5073L4, chloroplastic.